A 342-amino-acid polypeptide reads, in one-letter code: Ribosomal RNA small subunit methyltransferase C (342 aa).

This sequence belongs to the methyltransferase superfamily. RsmC family. In terms of assembly, monomer.

Its subcellular location is the cytoplasm. The catalysed reaction is guanosine(1207) in 16S rRNA + S-adenosyl-L-methionine = N(2)-methylguanosine(1207) in 16S rRNA + S-adenosyl-L-homocysteine + H(+). Functionally, specifically methylates the guanine in position 1207 of 16S rRNA in the 30S particle. The polypeptide is Ribosomal RNA small subunit methyltransferase C (Shewanella loihica (strain ATCC BAA-1088 / PV-4)).